The primary structure comprises 361 residues: G-protein coupled receptor 183 (361 aa).

Residues 1–31 (MDIQMANNFTPPSATPQGNDCDLYAHHSTAR) lie on the Extracellular side of the membrane. Residues 32–57 (IVMPLHYSLVFIIGLVGNLLALVVIV) form a helical membrane-spanning segment. At 58–77 (QNRKKINSTTLYSTNLVISD) the chain is on the cytoplasmic side. A helical membrane pass occupies residues 78-95 (ILFTTALPTRIAYYAMGF). Arg87 is a binding site for 7alpha,25-dihydroxycholesterol. Over 96-105 (DWRIGDALCR) the chain is Extracellular. Residues Cys104 and Cys181 are joined by a disulfide bond. Residues 106-127 (ITALVFYINTYAGVNFMTCLSI) form a helical membrane-spanning segment. 7alpha,25-dihydroxycholesterol contacts are provided by Tyr112 and Tyr116. An interaction with G proteins region spans residues 126–134 (SIDRFIAVV). Topologically, residues 128–149 (DRFIAVVHPLRYNKIKRIEHAK) are cytoplasmic. Residues 150–168 (GVCIFVWILVFAQTLPLLI) traverse the membrane as a helical segment. The Extracellular portion of the chain corresponds to 169 to 192 (NPMSKQEAERITCMEYPNFEETKS). A helical membrane pass occupies residues 193–215 (LPWILLGACFIGYVLPLIIILIC). The Cytoplasmic portion of the chain corresponds to 216 to 241 (YSQICCKLFRTAKQNPLTEKSGVNKK). A helical transmembrane segment spans residues 242 to 265 (ALNTIILIIVVFVLCFTPYHVAII). Tyr260 contributes to the 7alpha,25-dihydroxycholesterol binding site. Residues 266–287 (QHMIKKLRFSNFLECSQRHSFQ) are Extracellular-facing. The helical transmembrane segment at 288 to 312 (ISLHFTVCLMNFNCCMDPFIYFFAC) threads the bilayer. The Cytoplasmic segment spans residues 313 to 361 (KGYKRKVMRMLKRQVSVSISSAVKSAPEENSREMTETQMMIHSKSSNGK). Ser328 carries the post-translational modification Phosphoserine. Positions 340 to 361 (EENSREMTETQMMIHSKSSNGK) are disordered. A compositionally biased stretch (polar residues) spans 348–361 (ETQMMIHSKSSNGK).

It belongs to the G-protein coupled receptor 1 family. Homodimer and heterodimer. Heterodimerizes with CXCR5; leading to modulate the interaction between of CXCL13 and CXCR5. In terms of tissue distribution, expressed abundantly in lymphoid tissues such as spleen and lymph node, and in B- and T-lymphocytes. Also highly expressed in lung, heart and gastrointestinal tract, and weakly expressed in the urogenital system and brain. Expressed in astrocytes.

The protein localises to the cell membrane. G-protein coupled receptor expressed in lymphocytes that acts as a chemotactic receptor for B-cells, T-cells, splenic dendritic cells, monocytes/macrophages and astrocytes. Receptor for oxysterol 7-alpha,25-dihydroxycholesterol (7-alpha,25-OHC) and other related oxysterols. Mediates cell positioning and movement of a number of cells by binding the 7-alpha,25-OHC ligand that forms a chemotactic gradient. Binding of 7-alpha,25-OHC mediates the correct localization of B-cells during humoral immune responses. Guides B-cell movement along the B-cell zone-T-cell zone boundary and later to interfollicular and outer follicular regions. Its specific expression during B-cell maturation helps position B-cells appropriately for mounting T-dependent antibody responses. Collaborates with CXCR5 to mediate B-cell migration; probably by forming a heterodimer with CXCR5 that affects the interaction between of CXCL13 and CXCR5. Also acts as a chemotactic receptor for some T-cells upon binding to 7-alpha,25-OHC ligand. Promotes follicular helper T (Tfh) cells differentiation by positioning activated T-cells at the follicle-T-zone interface, promoting contact of newly activated CD4 T-cells with activated dendritic cells and exposing them to Tfh-cell-promoting inducible costimulator (ICOS) ligand. Expression in splenic dendritic cells is required for their homeostasis, localization and ability to induce B- and T-cell responses: GPR183 acts as a chemotactic receptor in dendritic cells that mediates the accumulation of CD4(+) dendritic cells in bridging channels. Regulates migration of astrocytes and is involved in communication between astrocytes and macrophages. Promotes osteoclast precursor migration to bone surfaces. Signals constitutively through G(i)-alpha, but not G(s)-alpha or G(q)-alpha. Signals constitutively also via MAPK1/3 (ERK1/2). In Homo sapiens (Human), this protein is G-protein coupled receptor 183.